The primary structure comprises 165 residues: Phosphopantetheine adenylyltransferase (165 aa).

A substrate-binding site is contributed by T10. ATP is bound by residues 10–11 (TF) and H18. Substrate contacts are provided by K42, L75, and R89. ATP contacts are provided by residues 90-92 (GVR), E100, and 125-131 (YTYVAST).

The protein belongs to the bacterial CoaD family. As to quaternary structure, homohexamer. Mg(2+) is required as a cofactor.

Its subcellular location is the cytoplasm. It carries out the reaction (R)-4'-phosphopantetheine + ATP + H(+) = 3'-dephospho-CoA + diphosphate. It functions in the pathway cofactor biosynthesis; coenzyme A biosynthesis; CoA from (R)-pantothenate: step 4/5. Its function is as follows. Reversibly transfers an adenylyl group from ATP to 4'-phosphopantetheine, yielding dephospho-CoA (dPCoA) and pyrophosphate. The sequence is that of Phosphopantetheine adenylyltransferase from Chlorobaculum tepidum (strain ATCC 49652 / DSM 12025 / NBRC 103806 / TLS) (Chlorobium tepidum).